The primary structure comprises 342 residues: Phosphoribosylformylglycinamidine cyclo-ligase (342 aa).

Belongs to the AIR synthase family.

The protein resides in the cytoplasm. It catalyses the reaction 2-formamido-N(1)-(5-O-phospho-beta-D-ribosyl)acetamidine + ATP = 5-amino-1-(5-phospho-beta-D-ribosyl)imidazole + ADP + phosphate + H(+). It participates in purine metabolism; IMP biosynthesis via de novo pathway; 5-amino-1-(5-phospho-D-ribosyl)imidazole from N(2)-formyl-N(1)-(5-phospho-D-ribosyl)glycinamide: step 2/2. The chain is Phosphoribosylformylglycinamidine cyclo-ligase from Staphylococcus aureus (strain MRSA252).